Consider the following 499-residue polypeptide: Glycerol kinase (499 aa).

Thr-13 provides a ligand contact to ADP. Positions 13, 14, and 15 each coordinate ATP. Thr-13 is a binding site for sn-glycerol 3-phosphate. Arg-17 contributes to the ADP binding site. Sn-glycerol 3-phosphate is bound by residues Arg-83, Glu-84, Tyr-135, and Asp-244. Residues Arg-83, Glu-84, Tyr-135, Asp-244, and Gln-245 each contribute to the glycerol site. ADP is bound by residues Thr-266 and Gly-309. ATP is bound by residues Thr-266, Gly-309, Gln-313, and Gly-410. Positions 410 and 414 each coordinate ADP.

Belongs to the FGGY kinase family. Homotetramer and homodimer (in equilibrium).

It catalyses the reaction glycerol + ATP = sn-glycerol 3-phosphate + ADP + H(+). Its pathway is polyol metabolism; glycerol degradation via glycerol kinase pathway; sn-glycerol 3-phosphate from glycerol: step 1/1. With respect to regulation, activated by phosphorylation and inhibited by fructose 1,6-bisphosphate (FBP). Its function is as follows. Key enzyme in the regulation of glycerol uptake and metabolism. Catalyzes the phosphorylation of glycerol to yield sn-glycerol 3-phosphate. The chain is Glycerol kinase from Brevibacillus brevis (strain 47 / JCM 6285 / NBRC 100599).